Here is a 401-residue protein sequence, read N- to C-terminus: Argininosuccinate synthase (401 aa).

An ATP-binding site is contributed by 8–16 (AYSGGLDTS). Y85 is a binding site for L-citrulline. Residue G115 participates in ATP binding. L-aspartate is bound by residues T117, N121, and D122. L-citrulline is bound at residue N121. Residues R125, S173, E258, and Y270 each coordinate L-citrulline.

The protein belongs to the argininosuccinate synthase family. Type 1 subfamily. As to quaternary structure, homotetramer.

The protein resides in the cytoplasm. It catalyses the reaction L-citrulline + L-aspartate + ATP = 2-(N(omega)-L-arginino)succinate + AMP + diphosphate + H(+). It participates in amino-acid biosynthesis; L-arginine biosynthesis; L-arginine from L-ornithine and carbamoyl phosphate: step 2/3. In Staphylococcus carnosus (strain TM300), this protein is Argininosuccinate synthase.